Consider the following 500-residue polypeptide: Probable cytosol aminopeptidase (500 aa).

Mn(2+) contacts are provided by Lys-265 and Asp-270. Lys-277 is a catalytic residue. Mn(2+)-binding residues include Asp-288, Asp-347, and Glu-349. The active site involves Arg-351.

It belongs to the peptidase M17 family. It depends on Mn(2+) as a cofactor.

It is found in the cytoplasm. It catalyses the reaction Release of an N-terminal amino acid, Xaa-|-Yaa-, in which Xaa is preferably Leu, but may be other amino acids including Pro although not Arg or Lys, and Yaa may be Pro. Amino acid amides and methyl esters are also readily hydrolyzed, but rates on arylamides are exceedingly low.. The catalysed reaction is Release of an N-terminal amino acid, preferentially leucine, but not glutamic or aspartic acids.. Presumably involved in the processing and regular turnover of intracellular proteins. Catalyzes the removal of unsubstituted N-terminal amino acids from various peptides. The polypeptide is Probable cytosol aminopeptidase (Corynebacterium diphtheriae (strain ATCC 700971 / NCTC 13129 / Biotype gravis)).